Consider the following 555-residue polypeptide: Oxygen-dependent choline dehydrogenase (555 aa).

4–33 lines the FAD pocket; sequence DYIIIGAGSAGNVLATRLTEDPDVTVLLLE. Catalysis depends on H473, which acts as the Proton acceptor.

It belongs to the GMC oxidoreductase family. The cofactor is FAD.

It carries out the reaction choline + A = betaine aldehyde + AH2. The catalysed reaction is betaine aldehyde + NAD(+) + H2O = glycine betaine + NADH + 2 H(+). The protein operates within amine and polyamine biosynthesis; betaine biosynthesis via choline pathway; betaine aldehyde from choline (cytochrome c reductase route): step 1/1. Functionally, involved in the biosynthesis of the osmoprotectant glycine betaine. Catalyzes the oxidation of choline to betaine aldehyde and betaine aldehyde to glycine betaine at the same rate. The chain is Oxygen-dependent choline dehydrogenase from Proteus mirabilis (strain HI4320).